We begin with the raw amino-acid sequence, 545 residues long: MMGHRPVLVLSQNTKRESGRKVQSGNINAAKTIADIIRTCLGPKSMMKMLLDPMGGIVMTNDGNAILREIQVQHPAAKSMIEISRTQDEEVGDGTTSVIILAGEMLSVAEHFLEQQMHPTVVISAYRKALDDMISTLKKISIPVDISDSDMMLNIINSSITTKAISRWSSLACNIALDAVKMVQFEENGRKEIDIKKYARVEKIPGGIIEDSCVLRGVMINKDVTHPRMRRYIKNPRIVLLDSSLEYKKGESQTDIEITREEDFTRILQMEEEYIQQLCEDIIQLKPDVVITEKGISDLAQHYLMRANITAIRRVRKTDNNRIARACGARIVSRPEELREDDVGTGAGLLEIKKIGDEYFTFITDCKDPKACTILLRGASKEILSEVERNLQDAMQVCRNVLLDPQLVPGGGASEMAVAHALTEKSKAMTGVEQWPYRAVAQALEVIPRTLIQNCGASTIRLLTSLRAKHTQENCETWGVNGETGTLVDMKELGIWEPLAVKLQTYKTAVETAVLLLRIDDIVSGHKKKGDDQSRQGGAPDAGQE.

M1 bears the N-acetylmethionine mark. A disordered region spans residues 1-24 (MMGHRPVLVLSQNTKRESGRKVQS). Position 11 is a phosphoserine (S11). K15 is covalently cross-linked (Glycyl lysine isopeptide (Lys-Gly) (interchain with G-Cter in SUMO2)). G42 is a binding site for ADP. Position 42 (G42) interacts with ATP. Residue D93 coordinates Mg(2+). Residues G94, T95, T96, S97, T162, and K163 each contribute to the ADP site. Residues G94, T95, and T96 each contribute to the ATP site. S170 carries the phosphoserine modification. Residue K222 is modified to N6-acetyllysine. A phosphoserine mark is found at S243 and S244. Y247 is modified (phosphotyrosine). Residues K248 and K249 each participate in a glycyl lysine isopeptide (Lys-Gly) (interchain with G-Cter in SUMO2) cross-link. S252 is subject to Phosphoserine. The cysteines at positions 366 and 372 are disulfide-linked. K381 is covalently cross-linked (Glycyl lysine isopeptide (Lys-Gly) (interchain with G-Cter in SUMO2)). Position 411 (G411) interacts with ADP. ATP is bound at residue G411. Phosphothreonine occurs at positions 430 and 459. Positions 482, 483, 497, and 502 each coordinate ADP. G482 contacts ATP. An ATP-binding site is contributed by E497. Residues 526–545 (HKKKGDDQSRQGGAPDAGQE) form a disordered region.

Belongs to the TCP-1 chaperonin family. In terms of assembly, component of the chaperonin-containing T-complex (TRiC), a hexadecamer composed of two identical back-to-back stacked rings enclosing a protein folding chamber. Each ring is made up of eight different subunits: TCP1/CCT1, CCT2, CCT3, CCT4, CCT5, CCT6A/CCT6, CCT7, CCT8. Interacts with PACRG. Interacts with DNAAF4. Interacts with DLEC1.

It is found in the cytoplasm. It catalyses the reaction ATP + H2O = ADP + phosphate + H(+). In terms of biological role, component of the chaperonin-containing T-complex (TRiC), a molecular chaperone complex that assists the folding of actin, tubulin and other proteins upon ATP hydrolysis. The TRiC complex mediates the folding of WRAP53/TCAB1, thereby regulating telomere maintenance. As part of the TRiC complex may play a role in the assembly of BBSome, a complex involved in ciliogenesis regulating transports vesicles to the cilia. This is T-complex protein 1 subunit gamma (CCT3) from Homo sapiens (Human).